The sequence spans 260 residues: Protein phosphatase 1 regulatory subunit 35 (260 aa).

The disordered stretch occupies residues 1 to 100 (MMGFGASALE…PLLVAGAPGD (100 aa)). Residues Ser46 and Ser53 each carry the phosphoserine modification. Positions 64-76 (RKGRRGGSRRGRQ) are enriched in basic residues.

The protein belongs to the PPP1R35 family. In terms of assembly, interacts with PPP1CA; this interaction mediates the PPP1CA phosphatase activity inhibition. Interacts with RTTN; this interaction allows the mutual recruitment to the centriole.

The protein localises to the cytoplasm. Its subcellular location is the cytoskeleton. It localises to the microtubule organizing center. The protein resides in the centrosome. It is found in the centriole. Its function is as follows. During centriole duplication, plays a role in the centriole elongation by promoting the recruitment of the microtubule-binding elongation machinery through its interaction with TTTN, leading to the centriole to centrosome conversion. In addition may play a role in the primary cilia assembly. The polypeptide is Protein phosphatase 1 regulatory subunit 35 (Mus musculus (Mouse)).